The chain runs to 431 residues: tRNA-2-methylthio-N(6)-dimethylallyladenosine synthase (431 aa).

An MTTase N-terminal domain is found at 2 to 117; that stretch reads KKLFIETLGC…ITEVVDKKHA (116 aa). The [4Fe-4S] cluster site is built by cysteine 11, cysteine 48, cysteine 80, cysteine 149, cysteine 153, and cysteine 156. Residues 135–368 form the Radical SAM core domain; that stretch reads RTNPFKAMVN…QTRHTEILDE (234 aa). In terms of domain architecture, TRAM spans 371–431; the sequence is DAQLGKVHEV…SRGALDGVLV (61 aa).

Belongs to the methylthiotransferase family. MiaB subfamily. Monomer. [4Fe-4S] cluster serves as cofactor.

It localises to the cytoplasm. It carries out the reaction N(6)-dimethylallyladenosine(37) in tRNA + (sulfur carrier)-SH + AH2 + 2 S-adenosyl-L-methionine = 2-methylsulfanyl-N(6)-dimethylallyladenosine(37) in tRNA + (sulfur carrier)-H + 5'-deoxyadenosine + L-methionine + A + S-adenosyl-L-homocysteine + 2 H(+). In terms of biological role, catalyzes the methylthiolation of N6-(dimethylallyl)adenosine (i(6)A), leading to the formation of 2-methylthio-N6-(dimethylallyl)adenosine (ms(2)i(6)A) at position 37 in tRNAs that read codons beginning with uridine. This chain is tRNA-2-methylthio-N(6)-dimethylallyladenosine synthase, found in Sulfurovum sp. (strain NBC37-1).